Consider the following 286-residue polypeptide: Polyamine aminopropyltransferase (286 aa).

Positions 5-238 (PLWHETLHDH…GIMTFAWASD (234 aa)) constitute a PABS domain. Gln-33 contacts S-methyl-5'-thioadenosine. Residues His-64 and Asp-88 each contribute to the spermidine site. S-methyl-5'-thioadenosine contacts are provided by residues Glu-108 and 140–141 (DG). Residue Asp-158 is the Proton acceptor of the active site. Residue 158 to 161 (DCTD) participates in spermidine binding. Pro-165 is an S-methyl-5'-thioadenosine binding site.

It belongs to the spermidine/spermine synthase family. As to quaternary structure, homodimer or homotetramer.

It localises to the cytoplasm. It catalyses the reaction S-adenosyl 3-(methylsulfanyl)propylamine + putrescine = S-methyl-5'-thioadenosine + spermidine + H(+). The protein operates within amine and polyamine biosynthesis; spermidine biosynthesis; spermidine from putrescine: step 1/1. Catalyzes the irreversible transfer of a propylamine group from the amino donor S-adenosylmethioninamine (decarboxy-AdoMet) to putrescine (1,4-diaminobutane) to yield spermidine. This is Polyamine aminopropyltransferase from Klebsiella pneumoniae subsp. pneumoniae (strain ATCC 700721 / MGH 78578).